A 550-amino-acid chain; its full sequence is Formate--tetrahydrofolate ligase (550 aa).

62–69 contributes to the ATP binding site; the sequence is TPAGEGKS.

Belongs to the formate--tetrahydrofolate ligase family.

The catalysed reaction is (6S)-5,6,7,8-tetrahydrofolate + formate + ATP = (6R)-10-formyltetrahydrofolate + ADP + phosphate. It functions in the pathway one-carbon metabolism; tetrahydrofolate interconversion. The chain is Formate--tetrahydrofolate ligase from Corynebacterium diphtheriae (strain ATCC 700971 / NCTC 13129 / Biotype gravis).